The chain runs to 377 residues: Probable aspartic-type endopeptidase CTSD (377 aa).

The 292-residue stretch at 1–292 (SLIDTGASRT…DFDKNRVGLA (292 aa)) folds into the Peptidase A1 domain. Asp-4 is an active-site residue. An N-linked (GlcNAc...) asparagine glycan is attached at Asn-58. Asp-186 is an active-site residue. The interval 296–351 (YGETKDPPSSSHPPPAPTSNKASGGSPGLPEQSGTSSATTSTTGEPSSGSTASPSA) is disordered. Over residues 328-351 (SGTSSATTSTTGEPSSGSTASPSA) the composition is skewed to low complexity. Ser-350 carries the GPI-anchor amidated serine lipid modification. The propeptide at 351-377 (AASSVSMSAWLSLAVFLSTASSLILWD) is removed in mature form.

It belongs to the peptidase A1 family.

It is found in the cell membrane. Its function is as follows. Secreted aspartic-type endopeptidase which is secreted and contributes to virulence. The protein is Probable aspartic-type endopeptidase CTSD (CTSD) of Arthroderma otae (strain ATCC MYA-4605 / CBS 113480) (Microsporum canis).